Consider the following 152-residue polypeptide: SsrA-binding protein (152 aa).

Belongs to the SmpB family.

It localises to the cytoplasm. In terms of biological role, required for rescue of stalled ribosomes mediated by trans-translation. Binds to transfer-messenger RNA (tmRNA), required for stable association of tmRNA with ribosomes. tmRNA and SmpB together mimic tRNA shape, replacing the anticodon stem-loop with SmpB. tmRNA is encoded by the ssrA gene; the 2 termini fold to resemble tRNA(Ala) and it encodes a 'tag peptide', a short internal open reading frame. During trans-translation Ala-aminoacylated tmRNA acts like a tRNA, entering the A-site of stalled ribosomes, displacing the stalled mRNA. The ribosome then switches to translate the ORF on the tmRNA; the nascent peptide is terminated with the 'tag peptide' encoded by the tmRNA and targeted for degradation. The ribosome is freed to recommence translation, which seems to be the essential function of trans-translation. The protein is SsrA-binding protein of Rickettsia prowazekii (strain Madrid E).